Here is a 44-residue protein sequence, read N- to C-terminus: Thymosin beta-4, Y-chromosomal (44 aa).

The tract at residues 1–44 is disordered; that stretch reads MSDKPGMAEIEKFDKSKLKKTETQEKNPLSSKETIEQERQAGES. Basic and acidic residues-rich tracts occupy residues 9–25 and 33–44; these read EIEKFDKSKLKKTETQE and ETIEQERQAGES.

This sequence belongs to the thymosin beta family. As to expression, ubiquitous.

It is found in the cytoplasm. It localises to the cytoskeleton. Functionally, plays an important role in the organization of the cytoskeleton. Binds to and sequesters actin monomers (G actin) and therefore inhibits actin polymerization. The sequence is that of Thymosin beta-4, Y-chromosomal (TMSB4Y) from Homo sapiens (Human).